The chain runs to 755 residues: Xaa-Pro dipeptidyl-peptidase (755 aa).

Residues Ser-348, Asp-468, and His-498 each act as charge relay system in the active site.

This sequence belongs to the peptidase S15 family. In terms of assembly, homodimer.

The protein localises to the cytoplasm. It catalyses the reaction Hydrolyzes Xaa-Pro-|- bonds to release unblocked, N-terminal dipeptides from substrates including Ala-Pro-|-p-nitroanilide and (sequentially) Tyr-Pro-|-Phe-Pro-|-Gly-Pro-|-Ile.. Its function is as follows. Removes N-terminal dipeptides sequentially from polypeptides having unsubstituted N-termini provided that the penultimate residue is proline. The protein is Xaa-Pro dipeptidyl-peptidase of Streptococcus thermophilus (strain ATCC BAA-491 / LMD-9).